The following is a 196-amino-acid chain: Imidazoleglycerol-phosphate dehydratase (196 aa).

This sequence belongs to the imidazoleglycerol-phosphate dehydratase family.

The protein resides in the cytoplasm. The enzyme catalyses D-erythro-1-(imidazol-4-yl)glycerol 3-phosphate = 3-(imidazol-4-yl)-2-oxopropyl phosphate + H2O. It participates in amino-acid biosynthesis; L-histidine biosynthesis; L-histidine from 5-phospho-alpha-D-ribose 1-diphosphate: step 6/9. The polypeptide is Imidazoleglycerol-phosphate dehydratase (Clostridium novyi (strain NT)).